A 994-amino-acid polypeptide reads, in one-letter code: Valine--tRNA ligase (994 aa).

Residues 43–53 (PNVTGTLHMGH) carry the 'HIGH' region motif. The segment at 332–356 (IASGATSDTTDTPSDSDASNASNQH) is disordered. The segment covering 333-353 (ASGATSDTTDTPSDSDASNAS) has biased composition (low complexity). A 'KMSKS' region motif is present at residues 585-589 (KMSKS). Lys588 is an ATP binding site. The interval 691–713 (TAHSPAQHQAGQDGQDVPRTPQP) is disordered. The stretch at 928 to 994 (LIDVDAERAR…NGLRERRTTL (67 aa)) forms a coiled coil.

It belongs to the class-I aminoacyl-tRNA synthetase family. ValS type 1 subfamily. In terms of assembly, monomer.

It localises to the cytoplasm. The enzyme catalyses tRNA(Val) + L-valine + ATP = L-valyl-tRNA(Val) + AMP + diphosphate. In terms of biological role, catalyzes the attachment of valine to tRNA(Val). As ValRS can inadvertently accommodate and process structurally similar amino acids such as threonine, to avoid such errors, it has a 'posttransfer' editing activity that hydrolyzes mischarged Thr-tRNA(Val) in a tRNA-dependent manner. This Xylella fastidiosa (strain M23) protein is Valine--tRNA ligase.